Here is a 52-residue protein sequence, read N- to C-terminus: Large ribosomal subunit protein bL32c (52 aa).

This sequence belongs to the bacterial ribosomal protein bL32 family.

It localises to the plastid. Its subcellular location is the chloroplast. The protein is Large ribosomal subunit protein bL32c of Nymphaea alba (White water-lily).